The sequence spans 273 residues: MSILEKITSSPSECAEHLTNKDSCLSKKIQKELTSFLEKKETLGCDSESCVITHPAVKAYAQQKGLDLSKELETRFKAPGPRNNTGLLTNFNIDETLQRWAIKYTKFFNCPFSMMDFERVHYKFNQVDMVKVYKGEELQYVEGKVVKRPCNTFGCVLNTDFSTGTGKHWVAIFVDMRGDCWSIEYFNSAGNSPPGPVIRWMERVKQQLLKIHHTVKTLAVTNIRHQRSQTECGPYSLFYIRARLDNVSYAHFISARITDEDMYKFRTHLFRIA.

Active-site residues include His-168 and Asn-187. Position 226 (Gln-226) interacts with substrate. Cys-232 acts as the Nucleophile in catalysis.

Belongs to the peptidase C63 family.

It localises to the host cytoplasm. The protein localises to the virion. Functionally, cysteine protease that plays several role during infection including processing of the structural polyprotein or inhibition of the host immune response. Catalyzes the maturation of the pp220 and pp62 polyprotein precursors into core-shell proteins. Plays a role in the disruption of host pyroptosis via specific cleavage of gasdermin D/GSDMD. In addition, strongly decreases the host cGAS-STING signaling by targeting IKBKE via its enzymatic activity. Also impairs host FOXJ1-mediated antiviral effect via degradation of FOXJ1. Cleaves host G3BP1 inducing loss of stress granules formation. Interacts with and induces the degradation of host STAT2 via polyubiquitination of the latter. This Ornithodoros (relapsing fever ticks) protein is Cysteine protease S273R.